Reading from the N-terminus, the 74-residue chain is Putative sulfur carrier protein NMA0882 (74 aa).

Cys13 serves as the catalytic Cysteine persulfide intermediate.

The protein belongs to the sulfur carrier protein TusA family.

The protein is Putative sulfur carrier protein NMA0882 of Neisseria meningitidis serogroup A / serotype 4A (strain DSM 15465 / Z2491).